A 322-amino-acid chain; its full sequence is Acetyl-coenzyme A carboxylase carboxyl transferase subunit alpha (322 aa).

A CoA carboxyltransferase C-terminal domain is found at 30 to 293 (AVDISAEILR…KKALQDSLKL (264 aa)).

It belongs to the AccA family. As to quaternary structure, acetyl-CoA carboxylase is a heterohexamer composed of biotin carboxyl carrier protein (AccB), biotin carboxylase (AccC) and two subunits each of ACCase subunit alpha (AccA) and ACCase subunit beta (AccD).

It is found in the cytoplasm. The enzyme catalyses N(6)-carboxybiotinyl-L-lysyl-[protein] + acetyl-CoA = N(6)-biotinyl-L-lysyl-[protein] + malonyl-CoA. Its pathway is lipid metabolism; malonyl-CoA biosynthesis; malonyl-CoA from acetyl-CoA: step 1/1. Functionally, component of the acetyl coenzyme A carboxylase (ACC) complex. First, biotin carboxylase catalyzes the carboxylation of biotin on its carrier protein (BCCP) and then the CO(2) group is transferred by the carboxyltransferase to acetyl-CoA to form malonyl-CoA. The polypeptide is Acetyl-coenzyme A carboxylase carboxyl transferase subunit alpha (Nitrosospira multiformis (strain ATCC 25196 / NCIMB 11849 / C 71)).